Reading from the N-terminus, the 124-residue chain is Holo-[acyl-carrier-protein] synthase (124 aa).

2 residues coordinate Mg(2+): Asp-5 and Glu-51.

The protein belongs to the P-Pant transferase superfamily. AcpS family. It depends on Mg(2+) as a cofactor.

The protein localises to the cytoplasm. It catalyses the reaction apo-[ACP] + CoA = holo-[ACP] + adenosine 3',5'-bisphosphate + H(+). Its function is as follows. Transfers the 4'-phosphopantetheine moiety from coenzyme A to a Ser of acyl-carrier-protein. This chain is Holo-[acyl-carrier-protein] synthase, found in Hydrogenobaculum sp. (strain Y04AAS1).